Here is a 35-residue protein sequence, read N- to C-terminus: Photosystem II reaction center protein Psb30 (35 aa).

Residues 7 to 27 (LIANFAALALITLAGPAVIFI) traverse the membrane as a helical segment.

It belongs to the Psb30/Ycf12 family. In terms of assembly, PSII is composed of 1 copy each of membrane proteins PsbA, PsbB, PsbC, PsbD, PsbE, PsbF, PsbH, PsbI, PsbJ, PsbK, PsbL, PsbM, PsbT, PsbX, PsbY, PsbZ, Psb30/Ycf12, peripheral proteins of the oxygen-evolving complex and a large number of cofactors. It forms dimeric complexes.

The protein localises to the plastid. It localises to the organellar chromatophore thylakoid membrane. Functionally, a core subunit of photosystem II (PSII), probably helps stabilize the reaction center. This Paulinella chromatophora protein is Photosystem II reaction center protein Psb30.